The following is a 576-amino-acid chain: Sulfite reductase [NADPH] hemoprotein beta-component (576 aa).

Residues C435, C441, C480, and C484 each contribute to the [4Fe-4S] cluster site. C484 provides a ligand contact to siroheme.

Belongs to the nitrite and sulfite reductase 4Fe-4S domain family. In terms of assembly, alpha(8)-beta(8). The alpha component is a flavoprotein, the beta component is a hemoprotein. Siroheme serves as cofactor. The cofactor is [4Fe-4S] cluster.

It carries out the reaction hydrogen sulfide + 3 NADP(+) + 3 H2O = sulfite + 3 NADPH + 4 H(+). It participates in sulfur metabolism; hydrogen sulfide biosynthesis; hydrogen sulfide from sulfite (NADPH route): step 1/1. Its function is as follows. Component of the sulfite reductase complex that catalyzes the 6-electron reduction of sulfite to sulfide. This is one of several activities required for the biosynthesis of L-cysteine from sulfate. The sequence is that of Sulfite reductase [NADPH] hemoprotein beta-component from Photorhabdus laumondii subsp. laumondii (strain DSM 15139 / CIP 105565 / TT01) (Photorhabdus luminescens subsp. laumondii).